A 275-amino-acid chain; its full sequence is DNA repair protein RecO (275 aa).

The disordered stretch occupies residues 1–38 (MTDEADADPQPFAAPPATGAPAADKPARKPRRAAPRTS). The span at 8–24 (DPQPFAAPPATGAPAAD) shows a compositional bias: low complexity.

This sequence belongs to the RecO family.

Functionally, involved in DNA repair and RecF pathway recombination. This chain is DNA repair protein RecO, found in Burkholderia pseudomallei (strain 1710b).